We begin with the raw amino-acid sequence, 3649 residues long: N-(5-amino-5-carboxypentanoyl)-L-cysteinyl-D-valine synthase (3649 aa).

The interval 401 to 861 is domain 1 (adipate-activating); the sequence is SRDRAYVTYT…LAGHLESQGH (461 aa). 3 consecutive Carrier domains span residues 783-860, 1859-1936, and 2909-2984; these read APLL…ESQG, APVS…QAAA, and APRD…LSGL. 3 positions are modified to O-(pantetheine 4'-phosphoryl)serine: Ser-820, Ser-1896, and Ser-2944. A domain 2 (cysteine-activating) region spans residues 1014-1937; sequence HHIILDGWSL…QAEHIQAAAL (924 aa). The domain 3 (valine-activating) stretch occupies residues 2079-2985; the sequence is HHSCFDGWSW…FVDNVLSGLA (907 aa). Ser-3502 (for thioesterase activity) is an active-site residue.

Belongs to the ATP-dependent AMP-binding enzyme family. Pantetheine 4'-phosphate serves as cofactor.

It catalyses the reaction L-2-aminoadipate + L-valine + L-cysteine + 3 ATP + H2O = N-[(5S)-5-amino-5-carboxypentanoyl]-L-cysteinyl-D-valine + 3 AMP + 3 diphosphate + 3 H(+). The protein operates within antibiotic biosynthesis; penicillin G biosynthesis; penicillin G from L-alpha-aminoadipate and L-cysteine and L-valine: step 1/3. In terms of biological role, each of the constituent amino acids of the tripeptide acv are activated as aminoacyl-adenylates with peptide bonds formed through the participation of amino acid thioester intermediates. This chain is N-(5-amino-5-carboxypentanoyl)-L-cysteinyl-D-valine synthase (pcbAB), found in Amycolatopsis lactamdurans (Nocardia lactamdurans).